The chain runs to 316 residues: MTGTTTARSDDDSWDIASSVGATAVMVAAARAAETRSASPLIQDPFAQLLVERAGSGAWSVLASDGLRQQLAELDPDADRVMQYAVDYQAVRTRFFDGFFERAAHAGITQVVILAAGLDSRAYRLDWPAGTTVYEIDQPLVLQYKRHTLDAHDVRSACLRREVPVDLRQDWPAALQREGFDVAEPTAWLAEGLLMYLPTEAQDRLFELIVDQSAPGSRIAVEAVGPDNDKRQEFRSKMRAHFDRARKLAGMDGESLDVGSLMYHDENRTDVPQWLAGRGWTVRAIPAEVEMAEAGRPGYIEEDLRGNTLIEAELKG.

S-adenosyl-L-methionine is bound by residues aspartate 137 and 166-167 (DL).

The protein belongs to the UPF0677 family.

Exhibits S-adenosyl-L-methionine-dependent methyltransferase activity. The protein is Putative S-adenosyl-L-methionine-dependent methyltransferase MAB_4606c of Mycobacteroides abscessus (strain ATCC 19977 / DSM 44196 / CCUG 20993 / CIP 104536 / JCM 13569 / NCTC 13031 / TMC 1543 / L948) (Mycobacterium abscessus).